The chain runs to 475 residues: Equilibrative nucleoside transporter 3 (475 aa).

The Cytoplasmic segment spans residues 1-51; sequence MAFASEDIAYHSSNAVYRVPSNRHEADQEALLGKPLDYPAPGLQRPEDRFN. Phosphoserine is present on Ser21. The short motif at 31–32 is the Dileucine internalization motif element; sequence LL. The chain crosses the membrane as a helical span at residues 52 to 72; that stretch reads GAYIIFFCLGIGGLLPWNFFV. At 73-105 the chain is on the extracellular side; it reads TAKEYWAFKLRNCSSPASGKDPEDADILNYFES. Asn84 carries N-linked (GlcNAc...) asparagine glycosylation. A helical transmembrane segment spans residues 106-126; that stretch reads YLAVASTVPSLLFLVANFLLV. At 127-132 the chain is on the cytoplasmic side; the sequence is NRIRVH. A helical transmembrane segment spans residues 133–153; the sequence is VRVLASLSVSLAIFVVMAVLV. Topologically, residues 154–162 are extracellular; sequence RVDTSSWTR. A helical transmembrane segment spans residues 163–183; that stretch reads GFFSIAMACMAIISSSSTIFN. Topologically, residues 184 to 199 are cytoplasmic; the sequence is SSVYGLTGSFPMRNAQ. The chain crosses the membrane as a helical span at residues 200 to 220; sequence ALISGGAMGGTVSAVASLVDL. Residues 221 to 230 lie on the Extracellular side of the membrane; the sequence is AASSDVRDSA. The chain crosses the membrane as a helical span at residues 231–251; sequence LAFFLTAAVFLGLCVGLYLLL. The Cytoplasmic segment spans residues 252–305; the sequence is PQLEYARYYMRPVVPIHVFSSEDSPPRDAPSTSSVAPASRAVHTPPLGPILKKT. A disordered region spans residues 272–291; that stretch reads SEDSPPRDAPSTSSVAPASR. The helical transmembrane segment at 306 to 326 threads the bilayer; sequence AGLGFCAVFLYFITALIFPAI. At 327-340 the chain is on the extracellular side; it reads STNIQPMHKGTGSP. Residues 341–361 traverse the membrane as a helical segment; that stretch reads WTSKFYVPLTVFLLFNFADLC. Topologically, residues 362–377 are cytoplasmic; that stretch reads GRQVTAWIQVPGPRSK. Residues 378–398 traverse the membrane as a helical segment; that stretch reads LLPILAVSRVCLVPLFLLCNY. Topologically, residues 399 to 414 are extracellular; that stretch reads QPRSHLTLVLFQSDIY. Residues 415–437 traverse the membrane as a helical segment; it reads PILFTCLLGLSNGYLSTLVLMYG. Topologically, residues 438–450 are cytoplasmic; sequence PKIVPRELAEATS. Residues 451 to 471 traverse the membrane as a helical segment; it reads VVMLFYMSLGLMLGSACAALL. Residues 472–475 are Extracellular-facing; sequence EHFI.

Belongs to the SLC29A/ENT transporter (TC 2.A.57) family. In terms of tissue distribution, widely expressed. Highest levels in heart and liver (at protein level).

The protein resides in the lysosome membrane. It is found in the late endosome membrane. Its subcellular location is the mitochondrion membrane. The protein localises to the cell membrane. The catalysed reaction is adenosine(in) = adenosine(out). The enzyme catalyses guanosine(in) = guanosine(out). It carries out the reaction inosine(in) = inosine(out). It catalyses the reaction uridine(out) = uridine(in). The catalysed reaction is cytidine(in) = cytidine(out). The enzyme catalyses thymidine(in) = thymidine(out). It carries out the reaction 2'-deoxyadenosine(in) = 2'-deoxyadenosine(out). It catalyses the reaction 2'-deoxycytidine(in) = 2'-deoxycytidine(out). The catalysed reaction is guanine(out) = guanine(in). The enzyme catalyses uracil(in) = uracil(out). It carries out the reaction (R)-noradrenaline(out) = (R)-noradrenaline(in). It catalyses the reaction dopamine(out) = dopamine(in). The catalysed reaction is serotonin(out) = serotonin(in). The enzyme catalyses tyramine(in) = tyramine(out). It carries out the reaction ATP(in) = ATP(out). Functionally, uniporter that mediates the facilitative transport of nucleoside across lysosomal and mitochondrial membranes. Functions as a non-electrogenic Na(+)-independent transporter. Substrate transport is pH-dependent and enhanced under acidic condition, probably reflecting the location of the transporter in acidic intracellular compartments. Proton is not a cotransporting ion but most likely change the ionization state of the transporter which dictates transport-permissible/impermissible conformation for nucleoside translocation. May direct the nucleoside transport from lysosomes to cytosol or cytosol to mitochondria to facilitate the fundamental function of salvage synthesis of nucleic acids. Involved in the transport of nucleosides (adenosine, guanosine, uridine, thymidine, cytidine and inosine) and deoxynucleosides (deoxyadenosine, deoxycytidine). Also mediates transport of purine nucleobases (adenine, guanine) and pyrimidine nucleobases (uracil). Also able to transport monoamine neurotransmitters dopamine, serotonin, noradrenaline and tyramine. Capable of transporting ATP. Mediates nucleoside export from lysosomes in macrophages, which regulates macrophage functions and numbers. The polypeptide is Equilibrative nucleoside transporter 3 (Rattus norvegicus (Rat)).